A 239-amino-acid polypeptide reads, in one-letter code: MLYDFASWYRRWRFGEGKRIDLVLIGPPGSGKGTQAVKIAERYNICHLSTGDILRAIIASGSELGQKVQKITESGGLVSDDIVCDLIAQKINSPECKNGLLFDGFPRTIEQAKKLDNLLRDRQIHLLAALEFKLDPSILEKRICGRLFHLASGRSYHELFNPPKVPMVDDITGDRLVHRSDDKPEALKKRLYEYDKNVAPILHFYESQNKLLRINANKDVNQVFSDIQELVRTKLAEEK.

Residue 29–34 (GSGKGT) coordinates ATP. The NMP stretch occupies residues 49–78 (STGDILRAIIASGSELGQKVQKITESGGLV). Residues Thr50, Arg55, 76–78 (GLV), 104–107 (GFPR), and Gln111 contribute to the AMP site. The LID stretch occupies residues 145–182 (GRLFHLASGRSYHELFNPPKVPMVDDITGDRLVHRSDD). Residues Arg146 and 155–156 (SY) contribute to the ATP site. The AMP site is built by Arg179 and Arg190.

The protein belongs to the adenylate kinase family. AK2 subfamily. In terms of assembly, monomer. Mg(2+) serves as cofactor.

The protein resides in the cytoplasm. The protein localises to the cytosol. It carries out the reaction AMP + ATP = 2 ADP. Its pathway is purine metabolism; purine nucleotide biosynthesis. In terms of biological role, catalyzes the reversible transfer of the terminal phosphate group between ATP and AMP. Plays an important role in cellular energy homeostasis and in adenine nucleotide metabolism. The sequence is that of Adenylate kinase 2 from Schistosoma mansoni (Blood fluke).